Reading from the N-terminus, the 180-residue chain is Inner membrane-spanning protein YciB (180 aa).

The next 6 helical transmembrane spans lie at 4–24 (LLSE…GGGI), 25–45 (QSAT…CYII), 52–72 (LSII…ISGD), 76–96 (IKIK…TSGI), 118–138 (ITLS…NEIV), and 150–170 (FKVF…LPLL).

The protein belongs to the YciB family.

The protein localises to the cell inner membrane. In terms of biological role, plays a role in cell envelope biogenesis, maintenance of cell envelope integrity and membrane homeostasis. The polypeptide is Inner membrane-spanning protein YciB (Rickettsia bellii (strain RML369-C)).